Reading from the N-terminus, the 601-residue chain is Elongation factor 4 (601 aa).

Residues Ser-7–Val-189 form the tr-type G domain. Residues Asp-19–Thr-24 and Asn-136–Asp-139 each bind GTP.

Belongs to the TRAFAC class translation factor GTPase superfamily. Classic translation factor GTPase family. LepA subfamily.

The protein localises to the cell inner membrane. It catalyses the reaction GTP + H2O = GDP + phosphate + H(+). Its function is as follows. Required for accurate and efficient protein synthesis under certain stress conditions. May act as a fidelity factor of the translation reaction, by catalyzing a one-codon backward translocation of tRNAs on improperly translocated ribosomes. Back-translocation proceeds from a post-translocation (POST) complex to a pre-translocation (PRE) complex, thus giving elongation factor G a second chance to translocate the tRNAs correctly. Binds to ribosomes in a GTP-dependent manner. This Gluconacetobacter diazotrophicus (strain ATCC 49037 / DSM 5601 / CCUG 37298 / CIP 103539 / LMG 7603 / PAl5) protein is Elongation factor 4.